The chain runs to 304 residues: Acetyl-coenzyme A carboxylase carboxyl transferase subunit beta (304 aa).

A CoA carboxyltransferase N-terminal domain is found at 52-304 (EVTKCPSCGV…TIFKVLNDII (253 aa)). Residues C56, C59, C75, and C78 each coordinate Zn(2+). A C4-type zinc finger spans residues 56–78 (CPSCGVLSHKSEIRANMKMCSNC).

It belongs to the AccD/PCCB family. As to quaternary structure, acetyl-CoA carboxylase is a heterohexamer composed of biotin carboxyl carrier protein (AccB), biotin carboxylase (AccC) and two subunits each of ACCase subunit alpha (AccA) and ACCase subunit beta (AccD). It depends on Zn(2+) as a cofactor.

Its subcellular location is the cytoplasm. It carries out the reaction N(6)-carboxybiotinyl-L-lysyl-[protein] + acetyl-CoA = N(6)-biotinyl-L-lysyl-[protein] + malonyl-CoA. The protein operates within lipid metabolism; malonyl-CoA biosynthesis; malonyl-CoA from acetyl-CoA: step 1/1. In terms of biological role, component of the acetyl coenzyme A carboxylase (ACC) complex. Biotin carboxylase (BC) catalyzes the carboxylation of biotin on its carrier protein (BCCP) and then the CO(2) group is transferred by the transcarboxylase to acetyl-CoA to form malonyl-CoA. The polypeptide is Acetyl-coenzyme A carboxylase carboxyl transferase subunit beta (Fusobacterium nucleatum subsp. nucleatum (strain ATCC 25586 / DSM 15643 / BCRC 10681 / CIP 101130 / JCM 8532 / KCTC 2640 / LMG 13131 / VPI 4355)).